The chain runs to 338 residues: Methionine import ATP-binding protein MetN 2 (338 aa).

Residues 2 to 242 (IEIEKVCVDF…PQHAFTQQLV (241 aa)) form the ABC transporter domain. 39-46 (GTSGAGKS) contacts ATP.

It belongs to the ABC transporter superfamily. Methionine importer (TC 3.A.1.24) family. In terms of assembly, the complex is composed of two ATP-binding proteins (MetN), two transmembrane proteins (MetI) and a solute-binding protein (MetQ).

Its subcellular location is the cell inner membrane. The catalysed reaction is L-methionine(out) + ATP + H2O = L-methionine(in) + ADP + phosphate + H(+). It carries out the reaction D-methionine(out) + ATP + H2O = D-methionine(in) + ADP + phosphate + H(+). Its function is as follows. Part of the ABC transporter complex MetNIQ involved in methionine import. Responsible for energy coupling to the transport system. The sequence is that of Methionine import ATP-binding protein MetN 2 from Salmonella typhi.